The sequence spans 228 residues: MSYVFVNDSSQTNVPLLQACIDGDFTYSKRLLESGFDPNIRDSRGRTGLHLAAARGNVDICQLLHKFGADPLATDYQGNTALHLCGHVDTIQFLVSNGLKIDICNHQGATPLVLAKRRGVNKDVIRLLESLEEQEVKGFNRGTHSKLETMQTAESESAMESHSLLNPNLQQGEGVLSSFRTTWQEFVEDLGFWRVLLLILVIALLSLGIAYYVSGVLPFVDNQPGLVH.

4 ANK repeats span residues 11-40 (QTNVPLLQACIDGDFTYSKRLLESGFDPNI), 44-74 (RGRTGLHLAAARGNVDICQLLHKFGADPLAT), 77-103 (QGNTALHLCGHVDTIQFLVSNGLKIDI), and 107-138 (QGATPLVLAKRRGVNKDVIRLLESLEEQEVKG). A helical membrane pass occupies residues 195-215 (VLLLILVIALLSLGIAYYVSG).

The protein localises to the membrane. This chain is Ankyrin repeat domain-containing protein 46 (Ankrd46), found in Rattus norvegicus (Rat).